The chain runs to 669 residues: DNA mismatch repair protein MutL (669 aa).

The segment at 343-408 (SAFHRAEPEE…RAPSDSSVRE (66 aa)) is disordered. The span at 344–356 (AFHRAEPEERESQ) shows a compositional bias: basic and acidic residues. A compositionally biased stretch (polar residues) spans 357-372 (PETTPQYSPQSVSTTV). Residues 390-408 (TDYEIKPRDRAPSDSSVRE) show a composition bias toward basic and acidic residues.

This sequence belongs to the DNA mismatch repair MutL/HexB family.

This protein is involved in the repair of mismatches in DNA. It is required for dam-dependent methyl-directed DNA mismatch repair. May act as a 'molecular matchmaker', a protein that promotes the formation of a stable complex between two or more DNA-binding proteins in an ATP-dependent manner without itself being part of a final effector complex. The sequence is that of DNA mismatch repair protein MutL from Vibrio parahaemolyticus serotype O3:K6 (strain RIMD 2210633).